The following is a 201-amino-acid chain: Proteinase inhibitor type-2 CEVI57 (201 aa).

Residues 1-23 (MAVYKVSFLAHLLVLGMYLLVST) form the signal peptide. 3 tandem repeats follow at residues 27 to 83 (ANAC…DPKN), 84 to 143 (PNIC…IEPK), and 144 to 199 (GCTK…QSIS). Cystine bridges form between Cys-30-Cys-118, Cys-34-Cys-114, Cys-42-Cys-124, Cys-54-Cys-91, Cys-57-Cys-75, Cys-58-Cys-87, Cys-64-Cys-100, and Cys-117-Cys-135.

This sequence belongs to the protease inhibitor I20 (potato type II proteinase inhibitor) family.

This is Proteinase inhibitor type-2 CEVI57 (CEVI57) from Solanum lycopersicum (Tomato).